The following is a 132-amino-acid chain: Dormancy-associated protein 1 (132 aa).

Residues 53-76 (MPAAVSPGTPTTPTTPTTPRKDNV) are disordered. Low complexity predominate over residues 61-70 (TPTTPTTPTT). Residue Thr64 is modified to Phosphothreonine.

The protein belongs to the DRM1/ARP family. As to expression, isoform 1: Expressed mainly in the low bolt. Isoform 2: Expressed mainly in the low bolt. Detected in flowers. Isoform 4: Expressed mainly in the low bolt. Isoform 5: Expressed mainly in the 6 days old seedlings. Detected in 16 days old seedlings, axil, low bolt and floral samples, but only barely in leaves and top bolt.

In Arabidopsis thaliana (Mouse-ear cress), this protein is Dormancy-associated protein 1.